The following is a 366-amino-acid chain: A-type ATP synthase subunit C (366 aa).

This sequence belongs to the V-ATPase V0D/AC39 subunit family. As to quaternary structure, has multiple subunits with at least A(3), B(3), C, D, E, F, H, I and proteolipid K(x).

It is found in the cell membrane. Component of the A-type ATP synthase that produces ATP from ADP in the presence of a proton gradient across the membrane. The sequence is that of A-type ATP synthase subunit C from Thermococcus onnurineus (strain NA1).